Here is a 326-residue protein sequence, read N- to C-terminus: Beta-ketoacyl-[acyl-carrier-protein] synthase III (326 aa).

Residues C112 and H251 contribute to the active site. Positions 252–256 are ACP-binding; that stretch reads QANSR. The active site involves N281.

This sequence belongs to the thiolase-like superfamily. FabH family. As to quaternary structure, homodimer.

The protein localises to the cytoplasm. The enzyme catalyses malonyl-[ACP] + acetyl-CoA + H(+) = 3-oxobutanoyl-[ACP] + CO2 + CoA. It functions in the pathway lipid metabolism; fatty acid biosynthesis. Functionally, catalyzes the condensation reaction of fatty acid synthesis by the addition to an acyl acceptor of two carbons from malonyl-ACP. Catalyzes the first condensation reaction which initiates fatty acid synthesis and may therefore play a role in governing the total rate of fatty acid production. Possesses both acetoacetyl-ACP synthase and acetyl transacylase activities. Its substrate specificity determines the biosynthesis of branched-chain and/or straight-chain of fatty acids. This Clostridium botulinum (strain 657 / Type Ba4) protein is Beta-ketoacyl-[acyl-carrier-protein] synthase III.